A 732-amino-acid polypeptide reads, in one-letter code: E3 ubiquitin-protein ligase TRIM56 (732 aa).

The segment at 21–60 adopts an RING-type zinc-finger fold; sequence CKICLEQLRVPKTLPCLHTYCQDCLAQLAEGSRLRCPECR. The B box-type zinc-finger motif lies at 164 to 205; it reads RQAAQCPQHPGEALRFLCQPCSQLLCRECRLDPHLDHPCLPL. The Zn(2+) site is built by cysteine 169, histidine 172, cysteine 192, and histidine 197. Positions 211-286 form a coiled coil; it reads ARRPGLEELL…LRAHVEAAEE (76 aa). The segment covering 374 to 384 has biased composition (basic and acidic residues); that stretch reads LPQKDSGKDGA. A disordered region spans residues 374–462; it reads LPQKDSGKDG…PAPGPNLEGS (89 aa). The span at 389–405 shows a compositional bias: polar residues; sequence GDATQPQSRDGVQTPNQ. Phosphothreonine is present on threonine 402. The segment covering 407–416 has biased composition (basic and acidic residues); the sequence is DGAKTPKESR. Threonine 419 carries the phosphothreonine modification. Residues 434-446 show a composition bias toward basic residues; that stretch reads SNKKRKFKGRLKS. Serine 452 carries the post-translational modification Phosphoserine.

It belongs to the TRIM/RBCC family. As to quaternary structure, interacts with STING1. Interacts with TICAM1.

Its subcellular location is the cytoplasm. It carries out the reaction S-ubiquitinyl-[E2 ubiquitin-conjugating enzyme]-L-cysteine + [acceptor protein]-L-lysine = [E2 ubiquitin-conjugating enzyme]-L-cysteine + N(6)-ubiquitinyl-[acceptor protein]-L-lysine.. It participates in protein modification; protein ubiquitination. In terms of biological role, E3 ubiquitin-protein ligase that plays a key role in innate antiviral immunity by mediating ubiquitination of CGAS and STING1. In response to pathogen- and host-derived double-stranded DNA (dsDNA), targets STING1 to 'Lys-63'-linked ubiquitination, thereby promoting its homodimerization, a step required for the production of type I interferon IFN-beta. Also mediate monoubiquitination of CGAS, thereby promoting CGAS oligomerization and subsequent activation. Independently of its E3 ubiquitin ligase activity, positive regulator of TLR3 signaling. Potentiates extracellular double stranded RNA (dsRNA)-induced expression of IFNB1 and interferon-stimulated genes ISG15, IFIT1/ISG56, CXCL10, OASL and CCL5/RANTES. Restricts bovine viral diarrhea virus (BVDV) replication. The protein is E3 ubiquitin-protein ligase TRIM56 of Bos taurus (Bovine).